A 348-amino-acid polypeptide reads, in one-letter code: uncharacterized protein (348 aa).

Belongs to the Mu gp47/PBSX XkdT family.

This is an uncharacterized protein from Bacillus subtilis (strain 168).